A 473-amino-acid chain; its full sequence is MIDIKAQYDIPTMRRIQNIHFIGIGGVGMCGIAEVLHNQGYQVSGSDLKASSTTDRLEELGIKIYLGHLEENVYNAHVIVVSTAINEQNPEIIWGKEHRIPIVRRAEMLAELMRYRHGIAVAGTHGKTTTTSLMASILAATGEAPTFVIGGRLTSAGANAQLGSSAYLVAEADESDASFLHLQPQTVIVTNIDEDHMDTYDGDFEKVKHTFIEFVHNLPFYGLAVLCVDDENVREILPTLSRPVLTYGIDQEADFYATEIVQTGRYCEFLAHRPEGEPLKIRLPMPGRHNVLNALATIAVATDLGVDASAIQAGLMGFEGVGRRFQEQKPLALPNGSNVMFVDDYGHHPSEVLATIKAIRAGWPEKRLVMVYQPHRYTRTRDLYEDFVRVLSQVDVLLLLDVYSAGEAPINGADSRSLCGSIRQRGNVDPIHVGSEADLRSILSNVLREGDLLITQGAGDIGMVSKNLSVSGI.

123 to 129 (GTHGKTT) serves as a coordination point for ATP.

This sequence belongs to the MurCDEF family.

The protein resides in the cytoplasm. It catalyses the reaction UDP-N-acetyl-alpha-D-muramate + L-alanine + ATP = UDP-N-acetyl-alpha-D-muramoyl-L-alanine + ADP + phosphate + H(+). It functions in the pathway cell wall biogenesis; peptidoglycan biosynthesis. Cell wall formation. The chain is UDP-N-acetylmuramate--L-alanine ligase from Marinomonas sp. (strain MWYL1).